The sequence spans 254 residues: Thiazole synthase (254 aa).

Catalysis depends on K95, which acts as the Schiff-base intermediate with DXP. Residues G156, 182–183, and 204–205 contribute to the 1-deoxy-D-xylulose 5-phosphate site; these read AG and NT.

The protein belongs to the ThiG family. As to quaternary structure, homotetramer. Forms heterodimers with either ThiH or ThiS.

Its subcellular location is the cytoplasm. The enzyme catalyses [ThiS sulfur-carrier protein]-C-terminal-Gly-aminoethanethioate + 2-iminoacetate + 1-deoxy-D-xylulose 5-phosphate = [ThiS sulfur-carrier protein]-C-terminal Gly-Gly + 2-[(2R,5Z)-2-carboxy-4-methylthiazol-5(2H)-ylidene]ethyl phosphate + 2 H2O + H(+). It participates in cofactor biosynthesis; thiamine diphosphate biosynthesis. Catalyzes the rearrangement of 1-deoxy-D-xylulose 5-phosphate (DXP) to produce the thiazole phosphate moiety of thiamine. Sulfur is provided by the thiocarboxylate moiety of the carrier protein ThiS. In vitro, sulfur can be provided by H(2)S. In Shewanella sediminis (strain HAW-EB3), this protein is Thiazole synthase.